A 1371-amino-acid chain; its full sequence is Soluble scavenger receptor cysteine-rich domain-containing protein SSC5D (1371 aa).

An N-terminal signal peptide occupies residues 1–16 (MRGLACLLAMLVGIQA). The SRCR 1 domain maps to 20-120 (LRLADGPHGC…HEEDAGVVCV (101 aa)). 3 cysteine pairs are disulfide-bonded: cysteine 45–cysteine 109, cysteine 58–cysteine 119, and cysteine 89–cysteine 99. Residues 143–154 (LSGELSPSSEEP) are compositionally biased toward low complexity. Residues 143 to 200 (LSGELSPSSEEPPITHAPQPAASSQNGPRKKNPRPPKQTKSTRAPVLTNGAPHQERLR) are disordered. 2 SRCR domains span residues 199–299 (LRLV…LVCT) and 305–405 (IRLA…AVCD). 6 cysteine pairs are disulfide-bonded: cysteine 224-cysteine 288, cysteine 237-cysteine 298, cysteine 268-cysteine 278, cysteine 330-cysteine 394, cysteine 343-cysteine 404, and cysteine 374-cysteine 384. N-linked (GlcNAc...) asparagine glycans are attached at residues asparagine 377 and asparagine 422. The interval 431–466 (TSVGQMPGPAGPWPPSASPTAPPEPGPEAGSPQLRL) is disordered. Pro residues predominate over residues 439–456 (PAGPWPPSASPTAPPEPG). In terms of domain architecture, SRCR 4 spans 464–565 (LRLVAGPSRC…HNEDVGVTCT (102 aa)). 3 disulfide bridges follow: cysteine 489–cysteine 554, cysteine 502–cysteine 564, and cysteine 534–cysteine 544. A disordered region spans residues 592-756 (WLPGELTTKP…AGVPVPSGPF (165 aa)). Residues 599-611 (TKPSASLTSSVPQ) are compositionally biased toward polar residues. Positions 622-633 (KSTKKWVTKNAR) are enriched in basic residues. The segment covering 653-663 (TPTSLHPTART) has biased composition (polar residues). Over residues 665–676 (ELPKRLTTEAPH) the composition is skewed to basic and acidic residues. The span at 698–740 (PVVSQSTQGPQEVTSEATTTENPQTSLEPSGENTEGSLESSQD) shows a compositional bias: polar residues. Residues 741–755 (PATTPTAGVPVPSGP) are compositionally biased toward low complexity. The SRCR 5 domain maps to 758-858 (VRLADGPNRC…HEEDVVLTCT (101 aa)). 3 disulfide bridges follow: cysteine 783/cysteine 847, cysteine 796/cysteine 857, and cysteine 827/cysteine 837. Disordered regions lie at residues 888–1270 (RPGH…PFGP) and 1351–1371 (STPV…RGDV). Over residues 894–912 (SWATTTNTEVPSPATQNLP) the composition is skewed to polar residues. Composition is skewed to low complexity over residues 936 to 957 (KGTP…KSPG), 981 to 1004 (PTSA…RQTS), and 1018 to 1035 (GTSS…LPSP). 2 stretches are compositionally biased toward polar residues: residues 1039-1086 (ALST…TSEL) and 1102-1148 (SSDS…NPQQ). N-linked (GlcNAc...) asparagine glycans are attached at residues asparagine 1044 and asparagine 1131. Residues 1149 to 1163 (PRSPHPATSPQPPTN) are compositionally biased toward pro residues. Positions 1164 to 1189 (THPSSTPATPTESLPSSRKTELSSPT) are enriched in polar residues. A compositionally biased stretch (low complexity) spans 1218–1230 (ASESGPSSPSPAS). Polar residues predominate over residues 1244 to 1261 (RSQTLHSASDHLTQGPTP).

Interacts with LGALS1 and laminin. Partially N- and O-glycosylated. In terms of tissue distribution, detected throughout the gastrointestinal and genitourinary tracts, in serosal salivary gland, the exocrine part of pancreas and testis, as well as in a few tubular structures in kidney. Not detected in lung and heart (at protein level). Strongly expressed in testis, kidney and pancreas, with lower levels detected in bone marrow, spleen, lung, liver, colon, stomach and skeletal muscle. Very low levels or no expression detected in thymus, esophagus, jejunum, ileum, duodenum, ovary, uterus, heart, trachea, brain, cerebellum and bladder.

It is found in the secreted. The protein resides in the cytoplasm. Binds to extracellular matrix proteins. Binds to pathogen-associated molecular patterns (PAMPs) present on the cell walls of Gram-positive and Gram-negative bacteria and fungi, behaving as a pattern recognition receptor (PRR). Induces bacterial and fungal aggregation and subsequent inhibition of PAMP-induced cytokine release. Does not possess intrinsic bactericidal activity. May play a role in the innate defense and homeostasis of certain epithelial surfaces. The sequence is that of Soluble scavenger receptor cysteine-rich domain-containing protein SSC5D (Ssc5d) from Mus musculus (Mouse).